A 140-amino-acid chain; its full sequence is TPT1-like protein (140 aa).

The 135-residue stretch at 6 to 140 (MITYWDLISH…LANFKNYQKT (135 aa)) folds into the TCTP domain.

This sequence belongs to the TCTP family.

The sequence is that of TPT1-like protein from Homo sapiens (Human).